A 41-amino-acid polypeptide reads, in one-letter code: Omega-theraphotoxin-Hg1a (41 aa).

3 cysteine pairs are disulfide-bonded: cysteine 7–cysteine 21, cysteine 14–cysteine 26, and cysteine 20–cysteine 33.

This sequence belongs to the neurotoxin 10 (Hwtx-1) family. 56 (SNX-482) subfamily. In terms of tissue distribution, expressed by the venom gland.

The protein localises to the secreted. Its function is as follows. Toxin that blocks vertebrate P/Q-type (Cav2.1/CACNA1A) and R-type (Cav2.3/CACNA1E) voltage-gated calcium channels. Also inhibits sodium channels (Nav) in bovine chromaffin cells by delaying sodium channel inactivation. In Hysterocrates gigas (Cameroon red baboon tarantula), this protein is Omega-theraphotoxin-Hg1a.